Reading from the N-terminus, the 788-residue chain is Protein TRS1 (788 aa).

2 disordered regions span residues 1–82 (MAQR…NFWH) and 610–663 (IHKK…PSRV). The span at 16-25 (RGRGAGGPSG) shows a compositional bias: gly residues. Positions 26–56 (VGSSPPSSCVPMGATSTAGTGASAAPTATPG) are enriched in low complexity. The RNA-binding stretch occupies residues 74-248 (SGNNSNFWHG…HGAGEVVRLY (175 aa)). Over residues 651–660 (LRRDDEDWKP) the composition is skewed to basic and acidic residues. The interaction with host EIF2AK2/PKR stretch occupies residues 672-788 (LDETFWVLGS…NVATHYHYNA (117 aa)).

It belongs to the herpesviridae US22 family. As to quaternary structure, interacts with host EIF2AK2/PKR; this interaction retains EIF2AK2 to the host nucleus and prevents its activation. Interaction (via N-terminus) with host BECN1; this interaction inhibits host autophagy. Interacts with the viral DNA polymerase accessory subunit UL44. Interacts with host HSPA5.

Its subcellular location is the virion. It localises to the host cytoplasm. The protein localises to the host nucleus. Its function is as follows. Inhibits the establishment of the antiviral state in the infected cell. Prevents the phosphorylation of the host eukaryotic translation initiation factor eIF-2alpha/EIF2S1 and thus the shutoff of viral and cellular protein synthesis by directly interacting with EIF2AK2/PKR. Prevents stress granule formation in response to eIF-2alpha/EIF2S1 phosphorylation, thereby rescuing viral replication and protein synthesis. Also inhibits host autophagy by interacting with host Beclin-1/BECN1. This chain is Protein TRS1 (TRS1), found in Human cytomegalovirus (strain Merlin) (HHV-5).